A 183-amino-acid chain; its full sequence is ATP-dependent protease subunit HslV (183 aa).

The active site involves Thr2. 3 residues coordinate Na(+): Gly157, Cys160, and Thr163.

This sequence belongs to the peptidase T1B family. HslV subfamily. A double ring-shaped homohexamer of HslV is capped on each side by a ring-shaped HslU homohexamer. The assembly of the HslU/HslV complex is dependent on binding of ATP.

It is found in the cytoplasm. It carries out the reaction ATP-dependent cleavage of peptide bonds with broad specificity.. Allosterically activated by HslU binding. In terms of biological role, protease subunit of a proteasome-like degradation complex believed to be a general protein degrading machinery. The polypeptide is ATP-dependent protease subunit HslV (Vibrio parahaemolyticus serotype O3:K6 (strain RIMD 2210633)).